A 497-amino-acid polypeptide reads, in one-letter code: MSIPNSFIIVGSGVFGLSLAYALSLDDRFADKKIILVDRWNFEPPNATGSVHNPAAANADTSRVIRRDYPHGPYASLALEAMKHWRGKFGENNRYVNQRLLFSGEGSSLTTPPKALETVNYIKKAYAISCELTPGGRDAVQVLDSLDEVRAFLGNTPSHPPHLPVNKDPAARDLRGYVSNDCGWADAGASIEWLRQEVLRLGRVECVVGEVESLVYSDDQRAVKGVKLVDGKVLTAELTVIAAGARSSHILGIPKLCDVYSEFVAYIQLTKEEADELRRRQWPILVNCHRGVFAVGPDHDNCLKFGHFSYSGIVDVLREASIQVPTRPDGWEAQQKYWSDPRFAFGGEVKVSALGDVDDYENPAAQRALADYRLFLLELLGPTGLQGVDTLGLDQSDNLLNNIANRPFTRVRKCWYNDTPALDFVVDYHPSYGKTLFVATGGCDHAFKFLPIIGEKTLALILRNRGDSAVSLPAGVEPSLEELSELWRFPVELLQDN.

FAD contacts are provided by Val14, Phe15, Asp38, Asn53, Ala57, Asn58, Arg63, Val64, and Val211. At Cys414 the chain carries S-8alpha-FAD cysteine. FAD-binding residues include Phe447 and Lys448.

The protein belongs to the MSOX/MTOX family. Dimer. FAD is required as a cofactor.

It catalyses the reaction (2S,4S,5S)-2-amino-6-(3,4-dihydroxyphenyl)-4-hydroxy-5-(methylamino)hexanoyl-[peptidyl-carrier protein] + O2 = (2S,4S)-2-amino-4-[(3S)-7,8-dihydroxy-1,2,3,4-tetrahydroisoquinolin-3-yl]-4-hydroxybutanoyl-[peptidyl-carrier protein] + H2O2. The enzyme catalyses N-methyl-L-dopa + O2 = (3S)-7,8-dihydroxy-1,2,3,4-tetrahydroisoquinoline-3-carboxylate + H2O2. The catalysed reaction is N-methyl-D-dopa + O2 = (3R)-7,8-dihydroxy-1,2,3,4-tetrahydroisoquinoline-3-carboxylate + H2O2. It functions in the pathway secondary metabolite biosynthesis. Its function is as follows. Amino acid oxidase; part of the gene cluster that mediates the biosynthesis of the isoquinoline alkaloids fumisoquin A, fumisoquin B and fumisoquin C; as well as small amounts of fumipyrrole as a shunt metabolite. The products of the cluster lead to a brown coloration and are important for growth and conidiation. The nonribosomal peptide synthetase-like protein fsqF, which lacks a canonical condensation domain, is required for addition of a serine-derived dehydroalanine moiety to activated tyrosine but is not essential for the subsequent steps leading to isoquinoline formation. A different enzyme, most likely the ATP-grasp enzyme fsqD, is responsible for activation of tyrosine. Three additional enzymes encoded by the fsq cluster, the N-methyltransferase fsqC, the phenol 2-monooxygenase fsqG and the FAD-dependent oxidase fsqB, catalyze the formation of the isoquinoline ring system in the fumisoquins. FsqB converts the fspF thiolation domain-bound (2S,4S,5S)-2-amino-6-(3,4-dihydroxyphenyl)-4-hydroxy-5-(methylamino)hexanoyl into isoquinoline. The cyclization most likely proceeds via a two-step mechanism, beginning with FAD-dependent oxidation of the methyl group to an iminium species followed by electrophilic attack on the deprotonated phenol. Functionally, is able to convert N-methyl-3,4-dihydroxy-DL-phenylalanine (N-methyl-DOPA) directly into cyclic isoquinoline, in vitro. The absence of the meta-hydroxyl group, as in L-N-methyl-tyrosine, leads to a 25-fold lower rate of reduction and the formation of the demethylated product L-tyrosine, instead of a cyclic product. Does not accept the D-stereoisomer of N-methyltyrosine, in contrast to N-methyl-DOPA, for which both stereoisomers are oxidized with similar rates. The sequence is that of Amino acid oxidase fsqB from Aspergillus fumigatus (strain ATCC MYA-4609 / CBS 101355 / FGSC A1100 / Af293) (Neosartorya fumigata).